Reading from the N-terminus, the 269-residue chain is MKLNRAIGVIDSGVGGLTVAKELIRQLPKERIIYLGDTARCPYGPRSREEVRQFTWEMTEHLLDLNIKMLVIACNTATAVVLEEMQKQLPIPVVGVIHPGSRTALKVTNTYHVGIIGTIGTVKSGAYEEALKSINNRVMVESLACPPFVELVESGNFESEMAYEVVRETLQPLKSTDIDTLILGCTHYPILGPVIKKVMGDKVQLISSGDETAREVSTILYHSKMLNEGEEQSDHLFLTTGKIGLFKEIASKWFGQPIENVKHIHLEKE.

Residues 11 to 12 (DS) and 43 to 44 (YG) contribute to the substrate site. C74 acts as the Proton donor/acceptor in catalysis. A substrate-binding site is contributed by 75–76 (NT). The active-site Proton donor/acceptor is the C185. 186-187 (TH) is a substrate binding site.

Belongs to the aspartate/glutamate racemases family.

It carries out the reaction L-glutamate = D-glutamate. It functions in the pathway cell wall biogenesis; peptidoglycan biosynthesis. In terms of biological role, provides the (R)-glutamate required for cell wall biosynthesis. The sequence is that of Glutamate racemase from Bacillus cereus (strain G9842).